A 180-amino-acid polypeptide reads, in one-letter code: Adenine phosphoribosyltransferase (180 aa).

This sequence belongs to the purine/pyrimidine phosphoribosyltransferase family. Homodimer.

It localises to the cytoplasm. It catalyses the reaction AMP + diphosphate = 5-phospho-alpha-D-ribose 1-diphosphate + adenine. It functions in the pathway purine metabolism; AMP biosynthesis via salvage pathway; AMP from adenine: step 1/1. Its function is as follows. Catalyzes a salvage reaction resulting in the formation of AMP, that is energically less costly than de novo synthesis. The polypeptide is Adenine phosphoribosyltransferase (Haemophilus influenzae (strain PittEE)).